Reading from the N-terminus, the 436-residue chain is 4-hydroxyphenylpyruvate dioxygenase (436 aa).

2 consecutive VOC domains span residues 38–194 and 210–370; these read RFHH…GFEV and RLDH…IFTK. Fe cation is bound by residues His213, His295, and Glu381.

This sequence belongs to the 4HPPD family. The cofactor is Fe cation.

It localises to the cytoplasm. It carries out the reaction 3-(4-hydroxyphenyl)pyruvate + O2 = homogentisate + CO2. The protein operates within amino-acid degradation; L-phenylalanine degradation; acetoacetate and fumarate from L-phenylalanine: step 3/6. Its pathway is cofactor biosynthesis; prenylquinone biosynthesis. The polypeptide is 4-hydroxyphenylpyruvate dioxygenase (Plectranthus scutellarioides (Coleus)).